The chain runs to 317 residues: tRNA-cytidine(32) 2-sulfurtransferase (317 aa).

The PP-loop motif motif lies at 46–51; it reads SGGKDS. Residues Cys-121, Cys-124, and Cys-212 each coordinate [4Fe-4S] cluster.

This sequence belongs to the TtcA family. Homodimer. Mg(2+) serves as cofactor. Requires [4Fe-4S] cluster as cofactor.

The protein resides in the cytoplasm. It carries out the reaction cytidine(32) in tRNA + S-sulfanyl-L-cysteinyl-[cysteine desulfurase] + AH2 + ATP = 2-thiocytidine(32) in tRNA + L-cysteinyl-[cysteine desulfurase] + A + AMP + diphosphate + H(+). It functions in the pathway tRNA modification. In terms of biological role, catalyzes the ATP-dependent 2-thiolation of cytidine in position 32 of tRNA, to form 2-thiocytidine (s(2)C32). The sulfur atoms are provided by the cysteine/cysteine desulfurase (IscS) system. The sequence is that of tRNA-cytidine(32) 2-sulfurtransferase from Shewanella loihica (strain ATCC BAA-1088 / PV-4).